The following is a 473-amino-acid chain: MLRCAVKKFAYFATFLTIVANIYIYTYPSFHPEQCSWNCSNKNAPLQKDLTFVDKVKNYFSDVREQWHGSHASAGNDEDIHILAFGDPQIKGIWPKTPYVSRLDTYGNDYYLGHIYDMMQQRLKPQVVTVMGDLFSSQWIGDSEFHNRTKRYISRIFKRDPTSIENIKQQNLDEKGQYKANWPEWGDRFNEILDNVKENEADNQELSFGFGYENIHSWNPDLEDFLIINITGNHDVGYSGDATYQHMTRFHDLFGKDNYWIEYETNTTHPWRIVVLNDLLLEGPALQPEFVEATWIFLNQLNERKFNGSTVLLTHVPFYKREGLCVDGPDTRYYPDAHAPESYKSGLLRSQNHLSESVSNQVLNMIFENGKPGIILTGHDHEGCETVYNKKSTSTWEATKNIESDVFVKEITVKSMMGEFNGNTGLVTGHFNTDSMTWEWTFSLCPFAIQHVWWFAKVSLLVTIFTWSSLLFV.

Over 1–8 (MLRCAVKK) the chain is Cytoplasmic. Residues 9-29 (FAYFATFLTIVANIYIYTYPS) traverse the membrane as a helical segment. Residues 30–451 (FHPEQCSWNC…FSLCPFAIQH (422 aa)) are Lumenal-facing. N-linked (GlcNAc...) asparagine glycosylation is found at asparagine 38, asparagine 147, asparagine 229, asparagine 266, and asparagine 307. The helical transmembrane segment at 452–472 (VWWFAKVSLLVTIFTWSSLLF) threads the bilayer. Residue valine 473 is a topological domain, cytoplasmic.

N-glycosylated.

It localises to the endoplasmic reticulum membrane. Its function is as follows. Acts together with EMP24 and ERV25 in cargo exit from the endoplasmic reticulum. The protein is Protein TED1 (TED1) of Saccharomyces cerevisiae (strain ATCC 204508 / S288c) (Baker's yeast).